Reading from the N-terminus, the 137-residue chain is 15 kDa protein A (137 aa).

Residues 1 to 20 form the signal peptide; it reads MAGVWKVLVVLVGLAVVACA. Intrachain disulfides connect Cys77–Cys88 and Cys99–Cys116.

Belongs to the cathelicidin family. Large granules of neutrophils.

Its subcellular location is the secreted. Its function is as follows. Binds to bacterial lipopolysaccharides (LPS), potentiates strongly the early antibacterial effects of BPI. Inhibits the late lethal action of BPI. This Oryctolagus cuniculus (Rabbit) protein is 15 kDa protein A.